Here is a 98-residue protein sequence, read N- to C-terminus: Flagellar hook-basal body complex protein FliE (98 aa).

The protein belongs to the FliE family.

The protein localises to the bacterial flagellum basal body. The chain is Flagellar hook-basal body complex protein FliE from Listeria monocytogenes serovar 1/2a (strain ATCC BAA-679 / EGD-e).